The following is a 1117-amino-acid chain: ATP-dependent RNA helicase mtr4 (1117 aa).

The tract at residues lysine 19–aspartate 86 is disordered. Positions serine 65–glutamine 79 are enriched in basic and acidic residues. In terms of domain architecture, Helicase ATP-binding spans isoleucine 207 to cysteine 363. Alanine 220–threonine 227 contacts ATP. Residues aspartate 311–histidine 314 carry the DEIH box motif. A disordered region spans residues glycine 414–lysine 433. Residues aspartate 441–leucine 642 enclose the Helicase C-terminal domain.

This sequence belongs to the helicase family. SKI2 subfamily. In terms of assembly, component of the TRAMP complex composed of at least cid14, mtr4, and air1.

The protein resides in the nucleus. Functionally, component of the TRAMP complex which has a poly(A) RNA polymerase activity and is involved in a post-transcriptional quality control mechanism limiting inappropriate expression of genetic information. Polyadenylation is required for the degradative activity of the exosome on several of its nuclear RNA substrates. Required for heterochromatic gene silencing at centromeric repeats by either exosome- or RNAi-mediated degradation of heterochromatic transcripts. This Schizosaccharomyces pombe (strain 972 / ATCC 24843) (Fission yeast) protein is ATP-dependent RNA helicase mtr4 (mtr4).